Here is a 786-residue protein sequence, read N- to C-terminus: Rho GTPase-activating protein 10 (786 aa).

Positions 7-262 (EFSDCYLDSP…IRQNPKDQKR (256 aa)) constitute a BAR domain. The PH domain maps to 265-372 (QFTAEGYLYV…WLEALGGKEA (108 aa)). In terms of domain architecture, Rho-GAP spans 389 to 574 (AQLDKMGFTI…ILIENHEKIF (186 aa)). Disordered stretches follow at residues 584–609 (EPTCLSASPPNAPPRQSKRQGQRTKR) and 622–714 (EGDS…PFPL). Residues 599–609 (QSKRQGQRTKR) show a composition bias toward basic residues. Over residues 634-649 (PSSSQDSLSTPSPTTS) the composition is skewed to low complexity. The span at 673 to 701 (TATTPSQTRPSMVQWLNMQSPTTPSSNPA) shows a compositional bias: polar residues. A compositionally biased stretch (pro residues) spans 702–714 (GTPPSPRMSPFPL). Positions 728–786 (VINRKARAVYPCEAEHSSELSFEIGAIFEDVQTSREPGWLEGTLNGKRGLIPQNYVKLL) constitute an SH3 domain.

In terms of assembly, interacts with PKN3. Interacts with caspase-activated PAK2 proteolytic fragment PAK-2p34; the interaction does not affect ARHGAP10 GTPase activation activity towards RHOA and CDC42. Interacts via its SH3 domain with PTK2/FAK1. Interacts with PTK2B/PYK2; the interaction negatively regulates ARHGAP10 GTPase-activating activity. Interacts with MICAL1 and WDR44; complex formation might transit from GRAF2/ARHGAP10-MICAL1 to GRAF2/ARHGAP10-WDR44 complexes. In terms of processing, phosphorylated on tyrosine residues, probably involving PTK2B/PYK2. As to expression, high levels of expression in brain, testes, liver, heart and kidney.

It is found in the cytoplasm. Its subcellular location is the perinuclear region. The protein localises to the cell membrane. It localises to the endosome membrane. GTPase-activating protein that catalyzes the conversion of active GTP-bound Rho GTPases to their inactive GDP-bound form, thus suppressing various Rho GTPase-mediated cellular processes. Also converts Cdc42 to an inactive GDP-bound state. Essential for PTKB2 regulation of cytoskeletal organization via Rho family GTPases. Inhibits PAK2 proteolytic fragment PAK-2p34 kinase activity and changes its localization from the nucleus to the perinuclear region. Stabilizes PAK-2p34 thereby increasing stimulation of cell death. Associates with MICAL1 on the endosomal membrane to promote Rab8-Rab10-dependent tubule extension. After dissociation with MICAL1, recruits WDR44 which connects the endoplasmic reticulum (ER) with the endosomal tubule, thereby participating in the export of a subset of neosynthesized proteins. This Mus musculus (Mouse) protein is Rho GTPase-activating protein 10 (Arhgap10).